We begin with the raw amino-acid sequence, 375 residues long: Hemolysin BL-binding component (375 aa).

An N-terminal signal peptide occupies residues 1–31 (MIKKIPYKLLAVSTLLTITTANVVSPVATFA). A helical transmembrane segment spans residues 232–252 (FNVMKGAILGLPIIGGIIVGV).

In terms of assembly, composed of a binding component, B, and two lytic components, L1 and L2. All three subunits act synergically to cause hemolysis.

It localises to the secreted. The protein localises to the host cell membrane. Its function is as follows. Cytotoxic protein, part of the enterotoxin complex. Responsible for binding to erythrocytes. This enterotoxin is thought to be the cause of the diarrheal form of gastroenteritis caused by food-borne strains of B.cereus. The sequence is that of Hemolysin BL-binding component (hblA) from Bacillus cereus.